We begin with the raw amino-acid sequence, 274 residues long: Thiamine kinase (274 aa).

It belongs to the thiamine kinase family.

It catalyses the reaction thiamine + ATP = thiamine phosphate + ADP + H(+). Its pathway is cofactor biosynthesis; thiamine diphosphate biosynthesis; thiamine phosphate from thiamine: step 1/1. Functionally, catalyzes the ATP-dependent phosphorylation of thiamine to thiamine phosphate. Is involved in thiamine salvage. The protein is Thiamine kinase of Salmonella paratyphi A (strain ATCC 9150 / SARB42).